The chain runs to 323 residues: MKQYLELVAHVIKHGTLQANRTGVNTISFPGAMLRYDLQEGFPAITTRRMAFKSAIGEMVGFLRGVSNAAEFRELGCKVWDQNANENAQWLNNPFRKGEDDLGEIYGVQWRKWPAYKRIDTGNVAAIELALGQGYRQIAESEEDGQSFVVLYKAIDQIRQCIDTIINDPGSRRILFHGWNCAQLDEMALPPCHLLYQLHPNPQTREISLTLYIRSNDLGLGTPFNLTEGAALLSLIGRLTGYTPRWFTYFIGDAHVYENHLDMLNEQMTREPYPMPKLVISDRVPEFAKTGVYQPEWLELIEPSDFSLEGYQHHPAMTAPMAV.

DUMP is bound by residues Arg-21 and 172–173 (RR). Cys-192 acts as the Nucleophile in catalysis. Residues 214 to 217 (RSND), Asn-225, and 255 to 257 (HVY) contribute to the dUMP site. Asp-217 contributes to the (6R)-5,10-methylene-5,6,7,8-tetrahydrofolate binding site. Ala-322 is a (6R)-5,10-methylene-5,6,7,8-tetrahydrofolate binding site.

The protein belongs to the thymidylate synthase family. Bacterial-type ThyA subfamily. As to quaternary structure, homodimer.

The protein resides in the cytoplasm. The enzyme catalyses dUMP + (6R)-5,10-methylene-5,6,7,8-tetrahydrofolate = 7,8-dihydrofolate + dTMP. It functions in the pathway pyrimidine metabolism; dTTP biosynthesis. Catalyzes the reductive methylation of 2'-deoxyuridine-5'-monophosphate (dUMP) to 2'-deoxythymidine-5'-monophosphate (dTMP) while utilizing 5,10-methylenetetrahydrofolate (mTHF) as the methyl donor and reductant in the reaction, yielding dihydrofolate (DHF) as a by-product. This enzymatic reaction provides an intracellular de novo source of dTMP, an essential precursor for DNA biosynthesis. This chain is Thymidylate synthase, found in Pseudomonas syringae pv. tomato (strain ATCC BAA-871 / DC3000).